The sequence spans 250 residues: NADH-quinone oxidoreductase subunit C (250 aa).

Belongs to the complex I 30 kDa subunit family. In terms of assembly, NDH-1 is composed of 14 different subunits. Subunits NuoB, C, D, E, F, and G constitute the peripheral sector of the complex.

Its subcellular location is the cell inner membrane. The catalysed reaction is a quinone + NADH + 5 H(+)(in) = a quinol + NAD(+) + 4 H(+)(out). Its function is as follows. NDH-1 shuttles electrons from NADH, via FMN and iron-sulfur (Fe-S) centers, to quinones in the respiratory chain. The immediate electron acceptor for the enzyme in this species is believed to be ubiquinone. Couples the redox reaction to proton translocation (for every two electrons transferred, four hydrogen ions are translocated across the cytoplasmic membrane), and thus conserves the redox energy in a proton gradient. This is NADH-quinone oxidoreductase subunit C from Xanthomonas euvesicatoria pv. vesicatoria (strain 85-10) (Xanthomonas campestris pv. vesicatoria).